Here is a 382-residue protein sequence, read N- to C-terminus: Lipid-A-disaccharide synthase (382 aa).

It belongs to the LpxB family.

The enzyme catalyses a lipid X + a UDP-2-N,3-O-bis[(3R)-3-hydroxyacyl]-alpha-D-glucosamine = a lipid A disaccharide + UDP + H(+). It functions in the pathway bacterial outer membrane biogenesis; LPS lipid A biosynthesis. Condensation of UDP-2,3-diacylglucosamine and 2,3-diacylglucosamine-1-phosphate to form lipid A disaccharide, a precursor of lipid A, a phosphorylated glycolipid that anchors the lipopolysaccharide to the outer membrane of the cell. In Dechloromonas aromatica (strain RCB), this protein is Lipid-A-disaccharide synthase.